The chain runs to 40 residues: Sulfur globule protein TR2 (40 aa).

To C.vinosum CV3. In terms of assembly, the protein envelope of the sulfur globules is composed of the three different proteins TR0, TR1 and TR2.

Functionally, structural protein of the sulfur globules, which are intracellular globules that serve for sulfur storage in purple sulfur bacteria. The polypeptide is Sulfur globule protein TR2 (Thiocapsa roseopersicina).